Consider the following 597-residue polypeptide: Kelch-like protein 21 (597 aa).

One can recognise a BTB domain in the interval 35–103 (LDVTLEAAGG…SYTGRVAVSG (69 aa)). Positions 138–239 (CLDMQDFAEA…RRFYLLAHVE (102 aa)) constitute a BACK domain. 6 Kelch repeats span residues 287–335 (ILVL…ALGN), 336–382 (DIYV…VLDG), 384–422 (LYVV…ACRG), 423–470 (RLYA…TLNG), 472–512 (MYFV…VLGG), and 513–560 (KLYV…SIFR). Residues 570–597 (GRGFELNSGSNDVDAGYHRLPQNPEELH) are disordered.

Component of the BCR(KLHL21) E3 ubiquitin ligase complex, at least composed of CUL3, KLHL21 and RBX1.

It is found in the cytoplasm. It localises to the cytoskeleton. Its subcellular location is the spindle. It functions in the pathway protein modification; protein ubiquitination. Substrate-specific adapter of a BCR (BTB-CUL3-RBX1) E3 ubiquitin-protein ligase complex required for efficient chromosome alignment and cytokinesis. The BCR(KLHL21) E3 ubiquitin ligase complex regulates localization of the chromosomal passenger complex (CPC) from chromosomes to the spindle midzone in anaphase and mediates the ubiquitination of AURKB. Ubiquitination of AURKB by BCR(KLHL21) E3 ubiquitin ligase complex may not lead to its degradation by the proteasome. The chain is Kelch-like protein 21 (Klhl21) from Mus musculus (Mouse).